The sequence spans 300 residues: Aspartate carbamoyltransferase catalytic subunit (300 aa).

Carbamoyl phosphate is bound by residues R50 and T51. Position 78 (K78) interacts with L-aspartate. Carbamoyl phosphate is bound by residues R100, H127, and Q130. Residues R160 and R210 each coordinate L-aspartate. Carbamoyl phosphate is bound by residues A253 and P254.

The protein belongs to the aspartate/ornithine carbamoyltransferase superfamily. ATCase family. As to quaternary structure, heterododecamer (2C3:3R2) of six catalytic PyrB chains organized as two trimers (C3), and six regulatory PyrI chains organized as three dimers (R2).

It carries out the reaction carbamoyl phosphate + L-aspartate = N-carbamoyl-L-aspartate + phosphate + H(+). The protein operates within pyrimidine metabolism; UMP biosynthesis via de novo pathway; (S)-dihydroorotate from bicarbonate: step 2/3. In terms of biological role, catalyzes the condensation of carbamoyl phosphate and aspartate to form carbamoyl aspartate and inorganic phosphate, the committed step in the de novo pyrimidine nucleotide biosynthesis pathway. The protein is Aspartate carbamoyltransferase catalytic subunit of Staphylococcus saprophyticus subsp. saprophyticus (strain ATCC 15305 / DSM 20229 / NCIMB 8711 / NCTC 7292 / S-41).